The chain runs to 493 residues: Proline--tRNA ligase (493 aa).

Belongs to the class-II aminoacyl-tRNA synthetase family. ProS type 3 subfamily. As to quaternary structure, homodimer.

The protein localises to the cytoplasm. It catalyses the reaction tRNA(Pro) + L-proline + ATP = L-prolyl-tRNA(Pro) + AMP + diphosphate. Functionally, catalyzes the attachment of proline to tRNA(Pro) in a two-step reaction: proline is first activated by ATP to form Pro-AMP and then transferred to the acceptor end of tRNA(Pro). This is Proline--tRNA ligase from Parabacteroides distasonis (strain ATCC 8503 / DSM 20701 / CIP 104284 / JCM 5825 / NCTC 11152).